A 979-amino-acid polypeptide reads, in one-letter code: Putative disease resistance protein RGA1 (979 aa).

The NB-ARC domain maps to 143–437 (GSVLTEPQVY…MAHGFLLSKG (295 aa)). 182–189 (GMGGLGKT) is a binding site for ATP. LRR repeat units lie at residues 524 to 547 (FVSLRVLNLRNSNLNQLPSSIGDL), 549 to 570 (HLRYLDLSGNFRIRNLPKRLCK), 571 to 594 (LQNLQTLDLHYCDSLSCLPKQTSK), 595 to 619 (LGSLRNLLLDGCSLTSTPPRIGLLT), 637 to 661 (LGELKNLNLYGSISITKLDRVKKDT), 748 to 773 (LPCLESLELHTGSADVEYVEDNVHPG), 823 to 841 (VKTLKVIVTDATVLRSISN), 842 to 866 (LRALTSLDISDNVEATSLPEEMFKS), 868 to 890 (ANLKYLKISFFRNLKELPTSLAS), 891 to 915 (LNALKSLKFEFCDALESLPEEGVKG), 917 to 939 (TSLTELSVSNCMMLKCLPEGLQH), and 940 to 965 (LTALTTLTITQCPIVFKRCERGIGED).

The protein belongs to the disease resistance NB-LRR family.

Disease resistance protein. Resistance proteins guard the plant against pathogens that contain an appropriate avirulence protein via a direct or indirect interaction with this avirulence protein. That triggers a defense system which restricts the pathogen growth. The sequence is that of Putative disease resistance protein RGA1 (RGA1) from Solanum bulbocastanum (Wild potato).